A 119-amino-acid chain; its full sequence is UPF0102 protein MS1289 (119 aa).

It belongs to the UPF0102 family.

In Mannheimia succiniciproducens (strain KCTC 0769BP / MBEL55E), this protein is UPF0102 protein MS1289.